A 485-amino-acid polypeptide reads, in one-letter code: MKVLFAVSECAPFAKSGGLADVAGALPKELRRLGIDARVMLPKYETIAPEWKKKMKKVAELIVPVGWRRQYCGVEELRHDGVIYYFIDNEYYFKRPQLYGHYDDGERFAYFCRAVLEVLPEIQFQPDVIHCHDWHTGMVPFLLREQYRHELFYVDMRTVFTIHNLQFQGLFPRGILEDLLNLDGRYFTVDHLEFYGCVSFMKGALVASDLITTVSPTYKEEIQTAYYGERLDGLLRARRDDLLGILNGIDDEFYNPEADPFLTATYSVHTRERKQLNKRALQRQFGLPEWDDVPLIAMVTRMTAQKGLDLVTCVFHEMMSEDMQLVVLGTGDWRFEQFFSQMAAAYPGKVGVYIGFHEPLAHQIYAGADLFLIPSLFEPCGLSQMIALRYGTIPIVRETGGLNDTVQSYNEITKEGNGFSFTNFNAHDMLYTIRRALSFYRQPSVWEQLTERAMRGDYSWRRSANQYKQAYEQLIKKEEHTLVHG.

Position 15 (Lys15) interacts with ADP-alpha-D-glucose.

It belongs to the glycosyltransferase 1 family. Bacterial/plant glycogen synthase subfamily.

It carries out the reaction [(1-&gt;4)-alpha-D-glucosyl](n) + ADP-alpha-D-glucose = [(1-&gt;4)-alpha-D-glucosyl](n+1) + ADP + H(+). The protein operates within glycan biosynthesis; glycogen biosynthesis. In terms of biological role, synthesizes alpha-1,4-glucan chains using ADP-glucose. The chain is Glycogen synthase (glgA) from Geobacillus stearothermophilus (Bacillus stearothermophilus).